The chain runs to 160 residues: Protein max (160 aa).

Over residues 1-13 (MSDNDDIEVESDE) the composition is skewed to acidic residues. The interval 1 to 40 (MSDNDDIEVESDEEQPRFQSAADKRAHHNALERKRRDHIK) is disordered. An N-acetylserine modification is found at serine 2. Residues serine 2 and serine 11 each carry the phosphoserine modification. In terms of domain architecture, bHLH spans 23-74 (DKRAHHNALERKRRDHIKDSFHSLRDSVPSLQGEKASRAQILDKATEYIQYM). Positions 29–40 (NALERKRRDHIK) are enriched in basic and acidic residues. N6-acetyllysine is present on lysine 66. The interval 81–102 (HQQDIDDLKRQNALLEQQVRAL) is leucine-zipper. Residues 104 to 160 (KARSSAQLQTNYPSSDNSLYTNAKGGTISAFDGGSDSSSESEPEEPQSRKKLRMEAS) form a disordered region. Serine 107 is modified (phosphoserine). Residues 107–124 (SSAQLQTNYPSSDNSLYT) show a composition bias toward polar residues. Lysine 153 and lysine 154 each carry N6-acetyllysine.

It belongs to the MAX family. As to quaternary structure, efficient DNA binding requires dimerization with another bHLH protein. Binds DNA as a heterodimer with MYC or MAD. Part of the E2F6.com-1 complex in G0 phase composed of E2F6, MGA, MAX, TFDP1, CBX3, BAT8, EUHMTASE1, RING1, RNF2, MBLR, L3MBTL2 and YAF2. Component of some MLL1/MLL complex, at least composed of the core components KMT2A/MLL1, ASH2L, HCFC1/HCF1, WDR5 and RBBP5, as well as the facultative components BACC1, CHD8, E2F6, HSP70, INO80C, KANSL1, LAS1L, MAX, MCRS1, MGA, MYST1/MOF, PELP1, PHF20, PRP31, RING2, RUVB1/TIP49A, RUVB2/TIP49B, SENP3, TAF1, TAF4, TAF6, TAF7, TAF9 and TEX10. Interacts with SPAG9. The heterodimer MYC:MAX interacts with ABI1; the interaction may enhance MYC:MAX transcriptional activity. Phosphorylated.

It is found in the nucleus. The protein resides in the cell projection. Its subcellular location is the dendrite. Its function is as follows. Transcription regulator. Forms a sequence-specific DNA-binding protein complex with MYC or MAD which recognizes the core sequence 5'-CAC[GA]TG-3'. The MYC:MAX complex is a transcriptional activator, whereas the MAD:MAX complex is a repressor. CpG methylation of the recognition site greatly inhibits DNA binding, suggesting that DNA methylation may regulate the MYC:MAX complex in vivo. May repress transcription via the recruitment of a chromatin remodeling complex containing H3 'Lys-9' histone methyltransferase activity. Represses MYC transcriptional activity from E-box elements. The polypeptide is Protein max (Mus musculus (Mouse)).